Reading from the N-terminus, the 163-residue chain is Auxin-responsive protein IAA5 (163 aa).

The short motif at 15-19 (LRLGL) is the EAR-like (transcriptional repression) element. The PB1 domain occupies 74–160 (SSYVKVSVDG…KRLRIMKRSC (87 aa)).

It belongs to the Aux/IAA family. Homodimers and heterodimers. As to expression, highly expressed in stems and flowers.

The protein localises to the nucleus. In terms of biological role, aux/IAA proteins are short-lived transcriptional factors that function as repressors of early auxin response genes at low auxin concentrations. Repression is thought to result from the interaction with auxin response factors (ARFs), proteins that bind to the auxin-responsive promoter element (AuxRE). Formation of heterodimers with ARF proteins may alter their ability to modulate early auxin response genes expression. The sequence is that of Auxin-responsive protein IAA5 (IAA5) from Arabidopsis thaliana (Mouse-ear cress).